The chain runs to 90 residues: MAVKIRLKRMGAKKNPFYRIVVADSRSPRDGRFIETIGTYNPVAEPAEIKINEELALKWLQNGAKPSDTVRSLLSKQGILEKFHNLKYGK.

The protein belongs to the bacterial ribosomal protein bS16 family.

The protein is Small ribosomal subunit protein bS16 of Geobacillus thermodenitrificans (strain NG80-2).